The sequence spans 546 residues: MGERKGIPMALGLLAMILFFIASSSSHLVRASDDADDAIFYESFDEDFDGRWIVSDKEDYNGVWKHAKSDGHDDYGLLVSEQARKYAIVKELAESVSLKDGTVVLQFETRLQNGLECGGAYIKYLRPQESGWKPKEFDNESPYSIMFGPDKCGATNKVHFIFKHKNPKSGEYVEHHLKYPPSVPSDKLTHVYTAILKPDNELQILIDGEEKKKANFLSSEDFEPPLIPSKTIPDPDDKKPEDWDERAKIPDPSAVKPDDWDEDAPMEILDEEAEKPEGWLDDEPEEIDDPEATKPEDWDDEEDGEWEAPKIENPKCEAAPGCGEWKRPTKRNPAYKGKWSAPYIDNPSYKGIWKPREIPNPEYFELAKPDFEPIAAIGIEIWTMQDGILFDNVLIANDDKVAESYRETTWKPKFTVEKDKLKAEEEAATGSDGISGFQKKVFDLLYKIADIPFLSEHKSKIFDLIEKAEKQPNLTIGILVAVVVVFVSIFFRLIFGGKKPAKVEKKPERTEASNNQGSGENEENKEKEKQKEEASNAARRRPRRET.

A signal peptide spans 1 to 25 (MGERKGIPMALGLLAMILFFIASSS). The Lumenal segment spans residues 26-475 (SHLVRASDDA…EKAEKQPNLT (450 aa)). Ca(2+) is bound by residues serine 43 and aspartate 74. Cysteine 117 and cysteine 152 form a disulfide bridge. The an alpha-D-glucoside site is built by tyrosine 121, lysine 123, tyrosine 143, and aspartate 150. The disordered stretch occupies residues 217 to 329 (LSSEDFEPPL…PGCGEWKRPT (113 aa)). Residues 232–365 (IPDPDDKKPE…REIPNPEYFE (134 aa)) are p domain (Extended arm). The segment covering 233–249 (PDPDDKKPEDWDERAKI) has biased composition (basic and acidic residues). 5 repeat units span residues 234–245 (DPDDKKPEDWDE), 251–262 (DPSAVKPDDWDE), 270–281 (DEEAEKPEGWLD), 289–300 (DPEATKPEDWDD), and 304–314 (GEWEAPKIENP). 4 X approximate repeats stretches follow at residues 234–300 (DPDD…DWDD) and 304–361 (GEWE…IPNP). Acidic residues-rich tracts occupy residues 259–290 (DWDE…IDDP) and 297–306 (DWDDEEDGEW). Cysteine 316 and cysteine 322 form a disulfide bridge. 3 tandem repeats follow at residues 323–333 (GEWKRPTKRNP), 337–347 (GKWSAPYIDNP), and 351–361 (GIWKPREIPNP). Glutamate 380 provides a ligand contact to an alpha-D-glucoside. Aspartate 391 serves as a coordination point for Ca(2+). An N-linked (GlcNAc...) asparagine glycan is attached at asparagine 473. Residues 476–496 (IGILVAVVVVFVSIFFRLIFG) form a helical membrane-spanning segment. Over 497–546 (GKKPAKVEKKPERTEASNNQGSGENEENKEKEKQKEEASNAARRRPRRET) the chain is Cytoplasmic. Basic and acidic residues-rich tracts occupy residues 501–511 (AKVEKKPERTE) and 522–534 (EENK…KEEA). Residues 501 to 546 (AKVEKKPERTEASNNQGSGENEENKEKEKQKEEASNAARRRPRRET) are disordered.

The protein belongs to the calreticulin family.

It is found in the endoplasmic reticulum membrane. Functionally, calcium-binding protein that interacts with newly synthesized monoglucosylated glycoproteins in the endoplasmic reticulum. It may act in assisting protein assembly and/or in the retention within the ER of unassembled protein subunits. It seems to play a major role in the quality control apparatus of the ER by the retention of incorrectly folded proteins. The chain is Calnexin homolog from Glycine max (Soybean).